The primary structure comprises 296 residues: Enoyl-CoA hydratase AKT3-2 (296 aa).

The short motif at 294 to 296 (PKL) is the Peroxisomal targeting signal type 1 element.

Belongs to the enoyl-CoA hydratase/isomerase family.

The protein localises to the peroxisome. The enzyme catalyses a (3S)-3-hydroxyacyl-CoA = a (2E)-enoyl-CoA + H2O. The catalysed reaction is a 4-saturated-(3S)-3-hydroxyacyl-CoA = a (3E)-enoyl-CoA + H2O. It functions in the pathway mycotoxin biosynthesis. Functionally, enoyl-CoA hydratase; part of the gene clusters that mediate the biosynthesis of the host-selective toxins (HSTs) AK-toxins responsible for Japanese pear black spot disease by the Japanese pear pathotype. AK-toxins are esters of 9,10-epoxy 8-hydroxy 9-methyldecatrienoic acid (EDA). On cellular level, AK-toxins affect plasma membrane of susceptible cells and cause a sudden increase in loss of K(+) after a few minutes of toxin treatment. The acyl-CoA ligase AKT1, the hydrolase AKT2 and enoyl-CoA hydratase AKT3 are all involved in the biosynthesis of the AK-, AF- and ACT-toxin common 9,10-epoxy-8-hydroxy-9-methyl-decatrienoic acid (EDA) structural moiety. Part of the EDA biosynthesis occurs in the peroxisome since these 3 enzymes are localized in peroxisomes. The exact roles of the 3 enzymes, as well as of additional AK-toxin clusters enzymes, including AKT4, AKT6 and AKTS1, have still to be elucidated. The Cytochrome P450 monooxygenase AKT7 on the other side functions to limit production of EDA and AK-toxin, probably via the catalysis of a side reaction of EDA or its precursor. This is Enoyl-CoA hydratase AKT3-2 from Alternaria alternata (Alternaria rot fungus).